We begin with the raw amino-acid sequence, 125 residues long: Large ribosomal subunit protein bL12 (125 aa).

This sequence belongs to the bacterial ribosomal protein bL12 family. In terms of assembly, homodimer. Part of the ribosomal stalk of the 50S ribosomal subunit. Forms a multimeric L10(L12)X complex, where L10 forms an elongated spine to which 2 to 4 L12 dimers bind in a sequential fashion. Binds GTP-bound translation factors.

Its function is as follows. Forms part of the ribosomal stalk which helps the ribosome interact with GTP-bound translation factors. Is thus essential for accurate translation. The chain is Large ribosomal subunit protein bL12 from Ruthia magnifica subsp. Calyptogena magnifica.